The sequence spans 349 residues: DNA replication and repair protein RecF (349 aa).

ATP is bound at residue 30 to 37; it reads GKNGSGKT.

This sequence belongs to the RecF family.

The protein resides in the cytoplasm. The RecF protein is involved in DNA metabolism; it is required for DNA replication and normal SOS inducibility. RecF binds preferentially to single-stranded, linear DNA. It also seems to bind ATP. The protein is DNA replication and repair protein RecF of Francisella tularensis subsp. holarctica (strain FTNF002-00 / FTA).